The sequence spans 502 residues: Glycerol kinase (502 aa).

ADP is bound at residue T14. ATP contacts are provided by T14, T15, and S16. T14 is a sn-glycerol 3-phosphate binding site. R18 contributes to the ADP binding site. Residues R84, E85, Y137, and D247 each contribute to the sn-glycerol 3-phosphate site. Positions 84, 85, 137, 247, and 248 each coordinate glycerol. Residues T269 and G312 each coordinate ADP. ATP contacts are provided by T269, G312, Q316, and G413. ADP is bound by residues G413 and N417.

Belongs to the FGGY kinase family. Homotetramer and homodimer (in equilibrium). Heterodimer with EIIA-Glc. Binds 1 zinc ion per glycerol kinase EIIA-Glc dimer. The zinc ion is important for dimerization.

It catalyses the reaction glycerol + ATP = sn-glycerol 3-phosphate + ADP + H(+). Its pathway is polyol metabolism; glycerol degradation via glycerol kinase pathway; sn-glycerol 3-phosphate from glycerol: step 1/1. With respect to regulation, activity of this regulatory enzyme is affected by several metabolites. Allosterically and non-competitively inhibited by fructose 1,6-bisphosphate (FBP) and unphosphorylated phosphocarrier protein EIIA-Glc (III-Glc), an integral component of the bacterial phosphotransferase (PTS) system. Key enzyme in the regulation of glycerol uptake and metabolism. Catalyzes the phosphorylation of glycerol to yield sn-glycerol 3-phosphate. This Photorhabdus laumondii subsp. laumondii (strain DSM 15139 / CIP 105565 / TT01) (Photorhabdus luminescens subsp. laumondii) protein is Glycerol kinase.